Here is a 208-residue protein sequence, read N- to C-terminus: Guanylate kinase (208 aa).

The region spanning 5-184 is the Guanylate kinase-like domain; sequence GLLIVFSGPS…AAERVKCVIE (180 aa). 12-19 provides a ligand contact to ATP; it reads GPSGVGKG.

This sequence belongs to the guanylate kinase family.

It is found in the cytoplasm. It carries out the reaction GMP + ATP = GDP + ADP. Functionally, essential for recycling GMP and indirectly, cGMP. The chain is Guanylate kinase from Streptococcus pneumoniae serotype 4 (strain ATCC BAA-334 / TIGR4).